Reading from the N-terminus, the 376-residue chain is 23S rRNA (uracil(747)-C(5))-methyltransferase RlmC (376 aa).

[4Fe-4S] cluster-binding residues include Cys3, Cys11, Cys14, and Cys87. S-adenosyl-L-methionine contacts are provided by Gln212, Phe241, Glu262, and Asn307. The active-site Nucleophile is the Cys334.

It belongs to the class I-like SAM-binding methyltransferase superfamily. RNA M5U methyltransferase family. RlmC subfamily.

It catalyses the reaction uridine(747) in 23S rRNA + S-adenosyl-L-methionine = 5-methyluridine(747) in 23S rRNA + S-adenosyl-L-homocysteine + H(+). Its function is as follows. Catalyzes the formation of 5-methyl-uridine at position 747 (m5U747) in 23S rRNA. In Salmonella typhimurium (strain LT2 / SGSC1412 / ATCC 700720), this protein is 23S rRNA (uracil(747)-C(5))-methyltransferase RlmC.